The following is a 476-amino-acid chain: Ribulose bisphosphate carboxylase large chain (476 aa).

Substrate is bound by residues Asn124 and Thr174. Lys176 functions as the Proton acceptor in the catalytic mechanism. Substrate is bound at residue Lys178. 3 residues coordinate Mg(2+): Lys202, Asp204, and Glu205. An N6-carboxylysine modification is found at Lys202. His295 functions as the Proton acceptor in the catalytic mechanism. Positions 296, 328, and 380 each coordinate substrate.

Belongs to the RuBisCO large chain family. Type I subfamily. In terms of assembly, heterohexadecamer of 8 large chains and 8 small chains; disulfide-linked. The disulfide link is formed within the large subunit homodimers. Forms complexes of many stoichiometries with Raf1 with and without RbcS. RuBisCO interacts with the C-terminus of CcmM. The cofactor is Mg(2+). In terms of processing, the disulfide bond which can form in the large chain dimeric partners within the hexadecamer appears to be associated with oxidative stress and protein turnover.

It localises to the carboxysome. The enzyme catalyses 2 (2R)-3-phosphoglycerate + 2 H(+) = D-ribulose 1,5-bisphosphate + CO2 + H2O. It catalyses the reaction D-ribulose 1,5-bisphosphate + O2 = 2-phosphoglycolate + (2R)-3-phosphoglycerate + 2 H(+). Its function is as follows. RuBisCO catalyzes two reactions: the carboxylation of D-ribulose 1,5-bisphosphate, the primary event in carbon dioxide fixation, as well as the oxidative fragmentation of the pentose substrate in the photorespiration process. Both reactions occur simultaneously and in competition at the same active site. The sequence is that of Ribulose bisphosphate carboxylase large chain from Nostoc sp. (strain PCC 7120 / SAG 25.82 / UTEX 2576).